The following is a 739-amino-acid chain: NAD(P)H-quinone oxidoreductase subunit 5, chloroplastic (739 aa).

16 helical membrane-spanning segments follow: residues 9 to 29 (WVIPLLPLPVIMSMGFGLILI), 39 to 59 (IWAFPSVLLLSIAMVFSVQLS), 89 to 109 (IDPLTSIMLILITTVGILVLI), 125 to 145 (FVYISFFNTSMLGLVTSSNLI), 147 to 167 (IYFFWELVGMCSYLLIGFWFT), 185 to 205 (GDFGLLLGILGFFWITGSLEF), 219 to 239 (NGVNSLLTTLCAFLLFLGAVA), 258 to 278 (TPISALIQAATMVAAGIFLLA), 280 to 300 (LLPLFISLPLIMSFISLVGTI), 327 to 347 (LGYMMLALGIGSYQAALFHLI), 354 to 374 (ALLFLGSGSVIHSMEPLVGYS), 396 to 416 (TTFLWGTLSLCGIPPLACFWS), 425 to 445 (WLYSPFFGIIASFTAGLTAFY), 542 to 562 (LFPLLILLLFTLFIGFIGISF), 610 to 630 (TLAIFGLFIAYIFYGSAYSFF), and 719 to 739 (ISSYLFFFLCYVSLFLFFFLS).

This sequence belongs to the complex I subunit 5 family. As to quaternary structure, NDH is composed of at least 16 different subunits, 5 of which are encoded in the nucleus.

Its subcellular location is the plastid. It localises to the chloroplast thylakoid membrane. The catalysed reaction is a plastoquinone + NADH + (n+1) H(+)(in) = a plastoquinol + NAD(+) + n H(+)(out). It catalyses the reaction a plastoquinone + NADPH + (n+1) H(+)(in) = a plastoquinol + NADP(+) + n H(+)(out). NDH shuttles electrons from NAD(P)H:plastoquinone, via FMN and iron-sulfur (Fe-S) centers, to quinones in the photosynthetic chain and possibly in a chloroplast respiratory chain. The immediate electron acceptor for the enzyme in this species is believed to be plastoquinone. Couples the redox reaction to proton translocation, and thus conserves the redox energy in a proton gradient. The protein is NAD(P)H-quinone oxidoreductase subunit 5, chloroplastic (ndhF) of Triticum aestivum (Wheat).